A 464-amino-acid polypeptide reads, in one-letter code: Delta(5) fatty acid desaturase A (464 aa).

The Cytochrome b5 heme-binding domain maps to 13 to 90 (GKQYSWSELA…LKNYEIGYIS (78 aa)). Heme is bound by residues His-48 and His-71. A run of 2 helical transmembrane segments spans residues 125–145 (AVSIFSRLALVYLLVFVTYYL) and 153–173 (FYLNCFLAIVYALCNSLFSMH). The Histidine box-1 motif lies at 176 to 180 (HDSCH). The short motif at 212–217 (HVIGHH) is the Histidine box-2 element. Residues 318 to 338 (FTDLICYFLIAEFVFGWYLTI) form a helical membrane-spanning segment. Residues 396-400 (QVVHH) carry the Histidine box-3 motif.

The protein belongs to the fatty acid desaturase type 1 family. It depends on Fe cation as a cofactor.

It is found in the membrane. Its function is as follows. Specific for desaturation of the 5 position in C16 and C18 fatty acids. The protein is Delta(5) fatty acid desaturase A (fadA) of Dictyostelium discoideum (Social amoeba).